Reading from the N-terminus, the 282-residue chain is ATP synthase gamma chain (282 aa).

It belongs to the ATPase gamma chain family. As to quaternary structure, F-type ATPases have 2 components, CF(1) - the catalytic core - and CF(0) - the membrane proton channel. CF(1) has five subunits: alpha(3), beta(3), gamma(1), delta(1), epsilon(1). CF(0) has three main subunits: a, b and c.

Its subcellular location is the cell membrane. Produces ATP from ADP in the presence of a proton gradient across the membrane. The gamma chain is believed to be important in regulating ATPase activity and the flow of protons through the CF(0) complex. The protein is ATP synthase gamma chain of Clostridium botulinum (strain Okra / Type B1).